Consider the following 134-residue polypeptide: Ribonuclease VapC40 (134 aa).

The PINc domain maps to 3 to 126; it reads APDTSVLVAG…LRAVETYERL (124 aa). Residues Asp5 and Asp98 each contribute to the Mg(2+) site.

Belongs to the PINc/VapC protein family. Mg(2+) serves as cofactor.

In terms of biological role, toxic component of a type II toxin-antitoxin (TA) system. An RNase. Its cognate antitoxin is VapB40. This Mycobacterium tuberculosis (strain CDC 1551 / Oshkosh) protein is Ribonuclease VapC40.